Here is a 220-residue protein sequence, read N- to C-terminus: Pro-Pro endopeptidase (220 aa).

A signal peptide spans Met1–Ala26. Residues Lys35–Lys220 enclose the ATLF-like domain. 2 interacts with substrate peptide regions span residues Lys101–Trp103 and Gly117–Ser119. His142 is a Zn(2+) binding site. The active-site Proton acceptor is Glu143. Zn(2+) contacts are provided by His146, Tyr178, and Glu185.

The protein belongs to the peptidase M34 family. Pro-Pro endopeptidase subfamily. As to quaternary structure, monomer. The cofactor is Zn(2+).

It is found in the secreted. The enzyme catalyses The enzyme catalyzes the hydrolytic cleavage of peptide bonds between two proline residues.. Is inhibited by the chelating agent o-phenanthroline in vitro. Zinc-dependent endoprotease with a unique preference for proline residues surrounding the scissile bond. Exhibits a high preference for an asparagine at the P2 position and hydrophobic residues (Val, Ile, Leu) at the P3 position. Efficiently cleaves the LPXTG cell surface proteins CD630_28310 and CD630_32460 at multiple cleavage sites in vivo. Has a role in the regulation of C.difficile adhesion versus motility by cleaving surface adhesion proteins such as the collagen binding protein CD630_28310, and is important for efficient infection. Is also able to cleave fibronectin and fibrinogen in vitro; cleaves at the N-terminus of the beta-chain of fibrinogen. Destabilizes the fibronectin network produced by human fibroblasts. Therefore, may be important in key steps of clostridial pathogenesis by degrading extracellular matrix components associated with the gut epithelial cells. To a lesser extent, IgA1, IgA2, and human HSP 90-beta, but not HSP 90-alpha, are also substrates for the enzyme. Is not active on different collagen types, casein and gelatin. The protein is Pro-Pro endopeptidase of Clostridioides difficile (strain 630) (Peptoclostridium difficile).